We begin with the raw amino-acid sequence, 274 residues long: 3-methyl-2-oxobutanoate hydroxymethyltransferase (274 aa).

The Mg(2+) site is built by D44 and D83. 3-methyl-2-oxobutanoate is bound by residues D44–S45, D83, and K113. Position 115 (E115) interacts with Mg(2+). The active-site Proton acceptor is E182.

It belongs to the PanB family. Homodecamer; pentamer of dimers. Mg(2+) is required as a cofactor.

The protein resides in the cytoplasm. The enzyme catalyses 3-methyl-2-oxobutanoate + (6R)-5,10-methylene-5,6,7,8-tetrahydrofolate + H2O = 2-dehydropantoate + (6S)-5,6,7,8-tetrahydrofolate. The protein operates within cofactor biosynthesis; (R)-pantothenate biosynthesis; (R)-pantoate from 3-methyl-2-oxobutanoate: step 1/2. Its function is as follows. Catalyzes the reversible reaction in which hydroxymethyl group from 5,10-methylenetetrahydrofolate is transferred onto alpha-ketoisovalerate to form ketopantoate. In Campylobacter jejuni subsp. doylei (strain ATCC BAA-1458 / RM4099 / 269.97), this protein is 3-methyl-2-oxobutanoate hydroxymethyltransferase.